We begin with the raw amino-acid sequence, 2522 residues long: Unconventional myosin-IXAa (2522 aa).

The region spanning S15–L113 is the Ras-associating domain. The 861-residue stretch at K147 to H1007 folds into the Myosin motor domain. The helical transmembrane segment at I176–Y196 threads the bilayer. Residue G240–T247 coordinates ATP. The segment at V767–S802 is disordered. The span at S777–N786 shows a compositional bias: polar residues. The segment at L888–S910 is actin-binding. IQ domains lie at S1012–Q1039, Q1063–L1092, Q1102–R1131, and Q1125–K1154. A neck or regulatory domain region spans residues S1012 to Q1149. Residues K1150–R2497 are tail. 6 disordered regions span residues G1218–R1254, D1318–R1409, N1424–F1612, N1630–R1754, R1799–R1827, and L1962–D1983. The segment covering T1229–Q1242 has biased composition (basic and acidic residues). 2 stretches are compositionally biased toward polar residues: residues S1330–D1349 and S1366–T1390. Composition is skewed to basic and acidic residues over residues P1399–R1408 and A1426–D1435. A compositionally biased stretch (polar residues) spans A1437 to S1454. Residues V1456–E1525 adopt a coiled-coil conformation. 4 stretches are compositionally biased toward basic and acidic residues: residues E1458–E1484, I1492–R1523, P1549–D1566, and L1580–S1589. 2 stretches are compositionally biased toward polar residues: residues K1594–M1604 and Q1631–V1641. Residues P1656 to R1665 are compositionally biased toward basic residues. Over residues G1681 to E1690 the composition is skewed to acidic residues. 2 stretches are compositionally biased toward basic and acidic residues: residues L1738–V1753 and L1810–P1822. A Phorbol-ester/DAG-type zinc finger spans residues G1990–C2039. One can recognise a Rho-GAP domain in the interval V2054–Y2242. Disordered stretches follow at residues P2274 to K2325 and L2348 to V2522. The stretch at Q2317–E2344 forms a coiled coil. Positions T2366–D2383 are enriched in polar residues. Positions S2413–S2429 are enriched in low complexity. The segment covering R2436–S2448 has biased composition (basic residues). The span at R2497–E2506 shows a compositional bias: basic and acidic residues.

Belongs to the TRAFAC class myosin-kinesin ATPase superfamily. Myosin family.

The protein resides in the membrane. Its subcellular location is the cytoplasm. It is found in the synapse. The protein localises to the cell projection. It localises to the growth cone. Its function is as follows. Myosins are actin-based motor molecules with ATPase activity. Unconventional myosins serve in intracellular movements. Regulates Rho by stimulating it's GTPase activity in neurons. Required for the regulation of neurite branching and motor neuron axon guidance. This chain is Unconventional myosin-IXAa (myo9aa), found in Danio rerio (Zebrafish).